The following is an 800-amino-acid chain: DEP domain-containing protein 1A (800 aa).

The region spanning 24 to 108 (FRAGMPLKKH…DNSQLYRFPS (85 aa)) is the DEP domain. 3 disordered regions span residues 147-173 (ETLENVDPETQESPVGSSSGETERSRE), 306-326 (SQPGKRKNQEEPNCPQPAKNP), and 459-485 (INTSGSSVSSQLSADLRRNNSRPARAR). The region spanning 281-321 (PLLTYQYYELFVNILVMCGYITTPKSQPGKRKNQEEPNCPQ) is the Rho-GAP domain. Residues 459–468 (INTSGSSVSS) are compositionally biased toward low complexity.

This is DEP domain-containing protein 1A (depdc1a) from Danio rerio (Zebrafish).